A 103-amino-acid polypeptide reads, in one-letter code: Growth-regulated alpha protein (103 aa).

The first 30 residues, 1–30 (MARAANPAPRLLGAAMLLLLLVAAGRRAAG), serve as a signal peptide directing secretion. 2 disulfides stabilise this stretch: Cys-39–Cys-65 and Cys-41–Cys-81.

This sequence belongs to the intercrine alpha (chemokine CxC) family.

The protein resides in the secreted. Its function is as follows. Has chemotactic activity for neutrophils. The polypeptide is Growth-regulated alpha protein (CXCL1) (Ovis aries (Sheep)).